A 326-amino-acid chain; its full sequence is Peroxidase 46 (326 aa).

Residues 1 to 27 (MASSYRINCSTLLHLLMFLSSLLTSSA) form the signal peptide. Residue asparagine 28 is glycosylated (N-linked (GlcNAc...) asparagine). 4 disulfide bridges follow: cysteine 38/cysteine 114, cysteine 71/cysteine 76, cysteine 120/cysteine 322, and cysteine 199/cysteine 233. Residue histidine 69 is the Proton acceptor of the active site. Ca(2+) is bound by residues aspartate 70, valine 73, glycine 75, aspartate 77, and serine 79. Residue asparagine 85 is glycosylated (N-linked (GlcNAc...) asparagine). Residue histidine 192 participates in heme b binding. Threonine 193 is a Ca(2+) binding site. Ca(2+) contacts are provided by aspartate 246, threonine 249, and aspartate 254. Asparagine 278 is a glycosylation site (N-linked (GlcNAc...) asparagine).

It belongs to the peroxidase family. Classical plant (class III) peroxidase subfamily. Requires heme b as cofactor. The cofactor is Ca(2+).

The protein resides in the secreted. It carries out the reaction 2 a phenolic donor + H2O2 = 2 a phenolic radical donor + 2 H2O. Removal of H(2)O(2), oxidation of toxic reductants, biosynthesis and degradation of lignin, suberization, auxin catabolism, response to environmental stresses such as wounding, pathogen attack and oxidative stress. These functions might be dependent on each isozyme/isoform in each plant tissue. The chain is Peroxidase 46 (PER46) from Arabidopsis thaliana (Mouse-ear cress).